We begin with the raw amino-acid sequence, 463 residues long: Hexose-6-phosphate:phosphate antiporter (463 aa).

The Cytoplasmic portion of the chain corresponds to 1-24; that stretch reads MLAFLNQVRKPTLDLPLEVRRKMW. The chain crosses the membrane as a helical span at residues 25–45; sequence FKPFMQSYLVVFIGYLTMYLI. At 46 to 60 the chain is on the periplasmic side; sequence RKNFNIAQNDMISTY. The helical transmembrane segment at 61–81 threads the bilayer; sequence GLSMTQLGMIGLGFSITYGVG. The Cytoplasmic segment spans residues 82–96; sequence KTLVSYYADGKNTKQ. Residues 97–117 form a helical membrane-spanning segment; sequence FLPFMLILSAICMLGFSASMG. The Periplasmic segment spans residues 118-120; that stretch reads SGS. The helical transmembrane segment at 121-141 threads the bilayer; the sequence is VSLFLMIAFYALSGFFQSTGG. Topologically, residues 142–159 are cytoplasmic; it reads SCSYSTITKWTPRRKRGT. A helical membrane pass occupies residues 160 to 180; it reads FLGFWNISHNLGGAGAAGVAL. The Periplasmic segment spans residues 181 to 189; the sequence is FGANYLFDG. A helical transmembrane segment spans residues 190–210; it reads HVIGMFIFPSIIALIVGFIGL. At 211–259 the chain is on the cytoplasmic side; sequence RYGSDSPESYGLGKAEELFGEEISEEDKETESTDMTKWQIFVEYVLKNK. A helical transmembrane segment spans residues 260–280; it reads VIWLLCFANIFLYVVRIGIDQ. Over 281 to 297 the chain is Periplasmic; that stretch reads WSTVYAFQELKLSKAVA. The chain crosses the membrane as a helical span at residues 298 to 318; sequence IQGFTLFEAGALVGTLLWGWL. Residues 319 to 326 are Cytoplasmic-facing; the sequence is SDLANGRR. The helical transmembrane segment at 327–347 threads the bilayer; it reads GLVACIALALIIATLGVYQHA. At 348 to 357 the chain is on the periplasmic side; that stretch reads SNEYIYLASL. The chain crosses the membrane as a helical span at residues 358 to 378; the sequence is FALGFLVFGPQLLIGVAAVGF. Over 379–382 the chain is Cytoplasmic; it reads VPKK. The chain crosses the membrane as a helical span at residues 383-403; sequence AIGAADGIKGTFAYLIGDSFA. Residues 404 to 425 lie on the Periplasmic side of the membrane; that stretch reads KLGLGMIADGTPVFGLTGWAGT. Residues 426–446 traverse the membrane as a helical segment; it reads FAALDIAAIGCICLMAIVAVM. Residues 447-463 lie on the Cytoplasmic side of the membrane; sequence EERKIRREKKIQQLTVA.

The protein belongs to the major facilitator superfamily. Organophosphate:Pi antiporter (OPA) (TC 2.A.1.4) family.

It localises to the cell inner membrane. Mediates the exchange of external hexose 6-phosphate and internal inorganic phosphate. The chain is Hexose-6-phosphate:phosphate antiporter (uhpT) from Escherichia coli O157:H7.